A 452-amino-acid chain; its full sequence is Phosphoglucosamine mutase (452 aa).

Ser103 serves as the catalytic Phosphoserine intermediate. Mg(2+)-binding residues include Ser103, Asp243, Asp245, and Asp247. Phosphoserine is present on Ser103.

It belongs to the phosphohexose mutase family. Requires Mg(2+) as cofactor. Post-translationally, activated by phosphorylation.

The enzyme catalyses alpha-D-glucosamine 1-phosphate = D-glucosamine 6-phosphate. Its function is as follows. Catalyzes the conversion of glucosamine-6-phosphate to glucosamine-1-phosphate. The protein is Phosphoglucosamine mutase of Limosilactobacillus fermentum (strain NBRC 3956 / LMG 18251) (Lactobacillus fermentum).